Consider the following 83-residue polypeptide: Cytochrome b559 subunit alpha (83 aa).

Residues 21-35 form a helical membrane-spanning segment; the sequence is VIHSITIPSLFIAGW. Histidine 23 is a binding site for heme.

Belongs to the PsbE/PsbF family. As to quaternary structure, heterodimer of an alpha subunit and a beta subunit. PSII is composed of 1 copy each of membrane proteins PsbA, PsbB, PsbC, PsbD, PsbE, PsbF, PsbH, PsbI, PsbJ, PsbK, PsbL, PsbM, PsbT, PsbX, PsbY, PsbZ, Psb30/Ycf12, at least 3 peripheral proteins of the oxygen-evolving complex and a large number of cofactors. It forms dimeric complexes. The cofactor is heme b.

It is found in the plastid. The protein resides in the chloroplast thylakoid membrane. Functionally, this b-type cytochrome is tightly associated with the reaction center of photosystem II (PSII). PSII is a light-driven water:plastoquinone oxidoreductase that uses light energy to abstract electrons from H(2)O, generating O(2) and a proton gradient subsequently used for ATP formation. It consists of a core antenna complex that captures photons, and an electron transfer chain that converts photonic excitation into a charge separation. This chain is Cytochrome b559 subunit alpha, found in Pinus koraiensis (Korean pine).